The sequence spans 95 residues: Acylphosphatase (95 aa).

An Acylphosphatase-like domain is found at 10-95; sequence CIHVTVSGKV…VEDYSDFRVR (86 aa). Catalysis depends on residues arginine 25 and asparagine 43.

This sequence belongs to the acylphosphatase family.

It carries out the reaction an acyl phosphate + H2O = a carboxylate + phosphate + H(+). The chain is Acylphosphatase (acyP) from Coxiella burnetii (strain RSA 493 / Nine Mile phase I).